The chain runs to 732 residues: uncharacterized protein (732 aa).

The segment at 145-207 (ETLRDSVINP…RRRPEMASPH (63 aa)) is disordered. The segment covering 170–179 (KGHETLERGS) has biased composition (basic and acidic residues). One can recognise a Reverse transcriptase domain in the interval 176 to 524 (ERGSKALGPE…KKIPFLGYLI (349 aa)).

It is found in the mitochondrion. This is an uncharacterized protein from Marchantia polymorpha (Common liverwort).